The sequence spans 393 residues: 4-hydroxyphenylpyruvate dioxygenase (393 aa).

Thr-2 bears the N-acetylthreonine mark. VOC domains follow at residues 18–149 (HFHS…LVEK) and 180–338 (IIDH…IFTK). The residue at position 132 (Lys-132) is an N6-succinyllysine. His-183 contributes to the Fe cation binding site. Phosphoserine is present on residues Ser-211, Ser-226, and Ser-250. 2 residues coordinate Fe cation: His-266 and Glu-349.

It belongs to the 4HPPD family. In terms of assembly, homodimer. Requires Fe cation as cofactor.

The protein localises to the cytoplasm. It is found in the endoplasmic reticulum membrane. Its subcellular location is the golgi apparatus membrane. The catalysed reaction is 3-(4-hydroxyphenyl)pyruvate + O2 = homogentisate + CO2. Its pathway is amino-acid degradation; L-phenylalanine degradation; acetoacetate and fumarate from L-phenylalanine: step 3/6. Its function is as follows. Catalyzes the conversion of 4-hydroxyphenylpyruvic acid to homogentisic acid, one of the steps in tyrosine catabolism. The sequence is that of 4-hydroxyphenylpyruvate dioxygenase (HPD) from Bos taurus (Bovine).